Reading from the N-terminus, the 559-residue chain is Kelch repeat and BTB domain-containing protein 2 (559 aa).

The 70-residue stretch at 26–95 (CDVIITIGDG…LYNRHISSMN (70 aa)) folds into the BTB domain. The region spanning 128 to 223 (CIYIYHRLYE…CIDIQNLDKK (96 aa)) is the BACK domain. Kelch repeat units lie at residues 305 to 352 (EIII…VIDD), 353 to 399 (MIYA…VFDQ), and 401 to 463 (IYII…SHKD).

As to quaternary structure, interacts (via BTB domain) with host CUL3.

It localises to the host cytoplasm. Probable substrate-specific adapter of CUL3-containing E3 ubiquitin-protein ligases which mediate the ubiquitination and subsequent proteasomal degradation of host target proteins. The protein is Kelch repeat and BTB domain-containing protein 2 (KBTB2) of Mus musculus (Mouse).